An 802-amino-acid chain; its full sequence is Cell division cycle 5-like protein (802 aa).

HTH myb-type domains follow at residues 1–56 (MPRI…WLDP) and 57–108 (SIKK…DKAA). 2 DNA-binding regions (H-T-H motif) span residues 31-54 (WSRI…YEWL) and 82-104 (WRTI…EFLL). The segment at 108 to 143 (AQRDNEEETTDDPRKLKPGEIDPNPETKPARPDPID) is disordered. A compositionally biased stretch (basic and acidic residues) spans 118–127 (DDPRKLKPGE). Lys-135 participates in a covalent cross-link: Glycyl lysine isopeptide (Lys-Gly) (interchain with G-Cter in SUMO2). Positions 142–245 (IDMDEDELEM…DADFRKLRQQ (104 aa)) form a coiled coil. The Nuclear localization signal motif lies at 165–271 (KKAKRKAREK…KDKQHLKRKK (107 aa)). A required for interaction with CTNNBL1 region spans residues 200–206 (KKRKKKR). Lys-219 participates in a covalent cross-link: Glycyl lysine isopeptide (Lys-Gly) (interchain with G-Cter in SUMO2). Thr-227 is subject to Phosphothreonine. A compositionally biased stretch (basic and acidic residues) spans 246-262 (DLDGELRSEKEGRDRKK). The segment at 246–278 (DLDGELRSEKEGRDRKKDKQHLKRKKESDLPSA) is disordered. The tract at residues 260-606 (RKKDKQHLKR…NKKGKTVGFG (347 aa)) is interaction with PPP1R8. Phosphoserine is present on residues Ser-303 and Ser-358. Residues Thr-377, Thr-385, Thr-396, Thr-404, Thr-411, and Thr-415 each carry the phosphothreonine modification. Over residues 409–418 (LSTPFRTPSH) the composition is skewed to polar residues. Positions 409–459 (LSTPFRTPSHGSEGLTPRSGTTPKPVINSTPGRTPLRDKLNINPEDGMADY) are disordered. Residue Ser-417 is modified to Phosphoserine. Phosphothreonine occurs at positions 424 and 430. Over residues 426–440 (RSGTTPKPVINSTPG) the composition is skewed to polar residues. The residue at position 437 (Ser-437) is a Phosphoserine. Thr-438 and Thr-442 each carry phosphothreonine. Lys-487 is covalently cross-linked (Glycyl lysine isopeptide (Lys-Gly) (interchain with G-Cter in SUMO2)). The tract at residues 501 to 659 (ELEEREIDDT…GELSSEAYNQ (159 aa)) is interaction with DAPK3. Coiled coils occupy residues 676–701 (RYTR…INRG) and 764–802 (PRRL…KAKF). The interval 706–800 (EAKRAAKMEK…LLLEKETLKA (95 aa)) is interaction with PLRG1.

It belongs to the CEF1 family. As to quaternary structure, homodimer. Interacts with DAPK3. Component of the precatalytic, catalytic and postcatalytic spliceosome complexes. Part of a spliceosomal 'core' complex consisting of CDC5L, PLRG1, SPF27, CCAP1, CCAP3 and CCAP6. Interacts with PLRG1, Lodestar/TTF2, and NIPP1/PPP1R8. Component of the minor spliceosome, which splices U12-type introns. Within this complex, interacts with SCNM1. Component of the PRP19-CDC5L splicing complex composed of a core complex comprising a homotetramer of PRPF19, CDC5L, PLRG1 and BCAS2, and at least three less stably associated proteins CTNNBL1, CWC15 and HSPA8. Interacts (via its C-terminus) directly in the complex with PRPF19 and BCAS2. Interacts (via its C-terminus) directly with PRGL1 (via its WD40 repeat domain); the interaction is required for mRNA splicing but not for spliceosome assembly. Also interacts with CTNNBL1. Interacts with PRPF19 (via N-terminus). Interacts with USB1. Interacts with DDX41. In terms of processing, phosphorylated on serine and threonine residues. Phosphorylation on Thr-411 and Thr-438 is required for CDC5L-mediated mRNA splicing. Has no effect on subcellular location nor on homodimerization. Phosphorylated in vitro by CDK2. Phosphorylation enhances interaction with PPP1R8.

It is found in the nucleus. Its subcellular location is the nucleus speckle. It localises to the cytoplasm. DNA-binding protein involved in cell cycle control. May act as a transcription activator. Plays a role in pre-mRNA splicing as core component of precatalytic, catalytic and postcatalytic spliceosomal complexes. Component of the PRP19-CDC5L complex that forms an integral part of the spliceosome and is required for activating pre-mRNA splicing. The PRP19-CDC5L complex may also play a role in the response to DNA damage (DDR). As a component of the minor spliceosome, involved in the splicing of U12-type introns in pre-mRNAs. This is Cell division cycle 5-like protein (CDC5L) from Bos taurus (Bovine).